We begin with the raw amino-acid sequence, 233 residues long: TATA-box-binding protein 1 (233 aa).

A run of 2 repeats spans residues Leu58 to Val134 and Ile148 to Leu225.

Belongs to the TBP family. Belongs to the TFIID complex together with the TBP-associated factors (TAFs). Binds DNA as monomer.

The protein resides in the nucleus. Functionally, general transcription factor that functions at the core of the DNA-binding multiprotein factor TFIID. Binding of TFIID to the TATA box is the initial transcriptional step of the pre-initiation complex (PIC), playing a role in the activation of eukaryotic genes transcribed by RNA polymerase II. The sequence is that of TATA-box-binding protein 1 (TBP1) from Triticum aestivum (Wheat).